A 136-amino-acid polypeptide reads, in one-letter code: Interleukin-13 (136 aa).

A signal peptide spans 1–18 (MALWLTVVIAFTCIGGLA). 6 N-linked (GlcNAc...) asparagine glycosylation sites follow: Asn38, Asn49, Asn57, Asn72, Asn75, and Asn131. Intrachain disulfides connect Cys48–Cys76 and Cys64–Cys90.

The protein belongs to the IL-4/IL-13 family. In terms of assembly, interacts with IL13RA2.

It is found in the secreted. Its function is as follows. Cytokine that plays important roles in allergic inflammation and immune response to parasite infection. Synergizes with IL2 in regulating interferon-gamma synthesis. Stimulates B-cell proliferation, and activation of eosinophils, basophils, and mast cells. Plays an important role in controlling IL33 activity by modulating the production of transmembrane and soluble forms of interleukin-1 receptor-like 1/IL1RL1. Displays the capacity to antagonize Th1-driven proinflammatory immune response and downregulates synthesis of many proinflammatory cytokines including IL1, IL6, IL10, IL12 and TNF-alpha through a mechanism that partially involves suppression of NF-kappa-B. Also functions on nonhematopoietic cells, including endothelial cells where it induces vascular cell adhesion protein 1/VCAM1, which is important in the recruitment of eosinophils. Exerts its biological effects through its receptors which comprises the IL4R chain and the IL13RA1 chain, to activate JAK1 and TYK2, leading to the activation of STAT6. Aside from IL13RA1, another receptor IL13RA2 acts as a high affinity decoy for IL13 and mediates internalization and depletion of extracellular IL13. The polypeptide is Interleukin-13 (IL13) (Camelus bactrianus (Bactrian camel)).